The sequence spans 199 residues: Signal peptidase complex subunit 2 (199 aa).

Residues methionine 1–glycine 49 lie on the Cytoplasmic side of the membrane. The chain crosses the membrane as a helical span at residues leucine 50–aspartate 72. Over phenylalanine 73–arginine 81 the chain is Lumenal. A helical membrane pass occupies residues proline 82–phenylalanine 104. The Cytoplasmic portion of the chain corresponds to arginine 105–asparagine 199.

It belongs to the SPCS2 family. As to quaternary structure, component of the signal peptidase complex (SPC) composed of a catalytic subunit twr/SEC11 and three accessory subunits Spase12/SPCS1, Spase25/SPCS2 and Spase22-23/SPCS3. The complex induces a local thinning of the ER membrane which is used to measure the length of the signal peptide (SP) h-region of protein substrates. This ensures the selectivity of the complex towards h-regions shorter than 18-20 amino acids.

It is found in the endoplasmic reticulum membrane. Functionally, component of the signal peptidase complex (SPC) which catalyzes the cleavage of N-terminal signal sequences from nascent proteins as they are translocated into the lumen of the endoplasmic reticulum. Enhances the enzymatic activity of SPC and facilitates the interactions between different components of the translocation site. The sequence is that of Signal peptidase complex subunit 2 (Spase25) from Drosophila melanogaster (Fruit fly).